Consider the following 283-residue polypeptide: MGIMIDVLNYKLYGDVTVYDIIVVIVVMALATIIAKLITTNLRRALIDKMKRDQLELMLKVIYFGIIIVAFIAVLPALGLDLSGLLVAGGITGIVLGFASQSVVANLVSGIFLISEKPIKIGDQVNIDGVAGFVEDVNILSTIIRTYDGLYVRIPNEKVFTSNITNYVAHIARRFEYVVGIRYSDDAEKAIEIIKRIIEEHPFALKNPEPVVFVDNLGDSSVNIVVRIWAPSTEWYNVKMELLWKIKTELEKNGIEIPFPQRVVWFANELRANVEGKEERRQA.

3 consecutive transmembrane segments (helical) span residues 18–38, 61–81, and 94–114; these read VYDI…AKLI, VIYF…LGLD, and IVLG…IFLI.

This sequence belongs to the MscS (TC 1.A.23) family.

The protein resides in the cell membrane. This is an uncharacterized protein from Archaeoglobus fulgidus (strain ATCC 49558 / DSM 4304 / JCM 9628 / NBRC 100126 / VC-16).